The chain runs to 330 residues: D-alanine--D-alanine ligase (330 aa).

The region spanning 121–321 is the ATP-grasp domain; the sequence is NHYLKDFGVK…IKDVMTDIIE (201 aa). 149 to 204 is an ATP binding site; it reads VTRLGLPIFVKPNDGGSSFGVTKVKEVSAIQPAIAKAFGEGREVILERFIDGTEVT. Mg(2+) is bound by residues D275, E288, and N290.

Belongs to the D-alanine--D-alanine ligase family. The cofactor is Mg(2+). Requires Mn(2+) as cofactor.

Its subcellular location is the cytoplasm. It catalyses the reaction 2 D-alanine + ATP = D-alanyl-D-alanine + ADP + phosphate + H(+). It functions in the pathway cell wall biogenesis; peptidoglycan biosynthesis. In terms of biological role, cell wall formation. In Parabacteroides distasonis (strain ATCC 8503 / DSM 20701 / CIP 104284 / JCM 5825 / NCTC 11152), this protein is D-alanine--D-alanine ligase.